A 704-amino-acid chain; its full sequence is Elongation factor G (704 aa).

Residues 9–285 (AKVRNIGIMA…AIVAYLPSPL (277 aa)) form the tr-type G domain. GTP-binding positions include 18–25 (AHIDAGKT), 82–86 (DTPGH), and 136–139 (NKMD).

This sequence belongs to the TRAFAC class translation factor GTPase superfamily. Classic translation factor GTPase family. EF-G/EF-2 subfamily.

Its subcellular location is the cytoplasm. In terms of biological role, catalyzes the GTP-dependent ribosomal translocation step during translation elongation. During this step, the ribosome changes from the pre-translocational (PRE) to the post-translocational (POST) state as the newly formed A-site-bound peptidyl-tRNA and P-site-bound deacylated tRNA move to the P and E sites, respectively. Catalyzes the coordinated movement of the two tRNA molecules, the mRNA and conformational changes in the ribosome. The protein is Elongation factor G of Thermobifida fusca (strain YX).